A 398-amino-acid chain; its full sequence is Lysophospholipid transporter LplT (398 aa).

12 helical membrane-spanning segments follow: residues 16–36 (MIAVICAQFLSAFGDNALLFA), 53–73 (ILQMAFVATYIILAPFVGQVA), 91–111 (AGALVICFGFNPFLGYTLVGV), 139–159 (LMEASTIAAILIGSVAGGILA), 163–183 (IVAALAVCAVVYAAAVIANLY), 195–213 (SWTPRAMTQAFFNACVVLW), 227–247 (LFWGAGVTLRFLLVLWVPVAL), 253–273 (ATPTLLNAMVAVGIVIGAGAA), 286–306 (MPAGILIGVAVAIFALQTTLF), 310–330 (ALLLIIGVLGGFFVVPLNALL), 344–364 (IAVQNLGENTAMLLMLGLYSL), and 372–392 (VVGVGIGFGVVFALAISALWL).

Belongs to the major facilitator superfamily. LplT (TC 2.A.1.42) family.

The protein resides in the cell inner membrane. In terms of biological role, catalyzes the facilitated diffusion of 2-acyl-glycero-3-phosphoethanolamine (2-acyl-GPE) into the cell. The sequence is that of Lysophospholipid transporter LplT from Serratia proteamaculans (strain 568).